Here is a 145-residue protein sequence, read N- to C-terminus: Methyl-coenzyme M reductase I operon protein D (145 aa).

As to quaternary structure, MCR is composed of three subunits: alpha, beta, and gamma. The function of proteins C and D is not known.

The polypeptide is Methyl-coenzyme M reductase I operon protein D (mcrD) (Methanothermobacter marburgensis (strain ATCC BAA-927 / DSM 2133 / JCM 14651 / NBRC 100331 / OCM 82 / Marburg) (Methanobacterium thermoautotrophicum)).